A 295-amino-acid chain; its full sequence is sn-glycerol-3-phosphate transport system permease protein UgpA (295 aa).

Residues 1-11 are Cytoplasmic-facing; that stretch reads MSPSRPGFSCS. A helical membrane pass occupies residues 12–32; it reads WLPYLLVLPQLAITAIFFLWP. The Periplasmic portion of the chain corresponds to 33 to 80; the sequence is AGEALWYSVQTLDPFGLSSEFVGLSNFIQLFQDEYYLASFYTTLIFSA. An ABC transmembrane type-1 domain is found at 72–284; the sequence is FYTTLIFSAL…LLVIGLTVIQ (213 aa). A helical transmembrane segment spans residues 81 to 101; that stretch reads LVAGIGLIVSLFLAAMVNYVL. Topologically, residues 102-109 are cytoplasmic; sequence RGSRLYQT. Residues 110-130 traverse the membrane as a helical segment; sequence LLILPYAVAPAVAAVLWIFLF. Residues 131 to 157 are Periplasmic-facing; sequence DPGLGLITHALAKLGYSWNHAQNSGQA. The helical transmembrane segment at 158–178 threads the bilayer; sequence MFLVVLASVWKQISYNFLFFL. Over 179-207 the chain is Cytoplasmic; sequence AALQSIPKSLVEAAAIDGAGPVRRFFNLV. A helical membrane pass occupies residues 208–228; that stretch reads LPLISPVSFFLLVVNLVYAFF. The Periplasmic segment spans residues 229–262; it reads DTFPVIDAATGGGPVQATTTLIYKIYREGFAGLD. A helical membrane pass occupies residues 263 to 283; that stretch reads LSSSAAQSVILMLLVIGLTVI. Over 284-295 the chain is Cytoplasmic; that stretch reads QFRFVERKVRYQ.

It belongs to the binding-protein-dependent transport system permease family. UgpAE subfamily. As to quaternary structure, the complex is composed of two ATP-binding proteins (UgpC), two transmembrane proteins (UgpA and UgpE) and a solute-binding protein (UgpB).

It localises to the cell inner membrane. In terms of biological role, part of the ABC transporter complex UgpBAEC involved in sn-glycerol-3-phosphate (G3P) import. Probably responsible for the translocation of the substrate across the membrane. The sequence is that of sn-glycerol-3-phosphate transport system permease protein UgpA (ugpA) from Yersinia pestis bv. Antiqua (strain Antiqua).